The primary structure comprises 236 residues: LexA repressor (236 aa).

Positions 26 to 46 (FDEMKDALDLRSKSGIHRLIT) form a DNA-binding region, H-T-H motif. The interval 85 to 109 (PSVIEGNLGKVRPPSPTPAEDDHDR) is disordered. Residues serine 157 and lysine 195 each act as for autocatalytic cleavage activity in the active site.

It belongs to the peptidase S24 family. As to quaternary structure, homodimer.

The enzyme catalyses Hydrolysis of Ala-|-Gly bond in repressor LexA.. Functionally, represses a number of genes involved in the response to DNA damage (SOS response), including recA and lexA. In the presence of single-stranded DNA, RecA interacts with LexA causing an autocatalytic cleavage which disrupts the DNA-binding part of LexA, leading to derepression of the SOS regulon and eventually DNA repair. The polypeptide is LexA repressor (Rhodopseudomonas palustris (strain ATCC BAA-98 / CGA009)).